The following is a 275-amino-acid chain: MANYTAADVKKLRELTGSGMLDCKKALEESAGDFDKAVEILRVKGAKDVGKRAERNATEGLVAVSGNTMVEVNSETDFVAKNSDFKEFAAKVADAAAAAKANSQEELAAVDVDGQTADAALQEFSAKIGEKLELRRAVTLEGDKTAVYLHQRSADLPPAVGVLVAFTGEGEAAEAAARQAAMQIAALKASYLTREDVPAEIIEKERSIAEQITREEGKPEQAIPKIVEGRLNGFYKENVLLEQSSVADSKKTVKALLDEAGVTVTSFARFEVGQA.

The interval 76 to 79 is involved in Mg(2+) ion dislocation from EF-Tu; the sequence is TDFV.

This sequence belongs to the EF-Ts family.

The protein resides in the cytoplasm. Its function is as follows. Associates with the EF-Tu.GDP complex and induces the exchange of GDP to GTP. It remains bound to the aminoacyl-tRNA.EF-Tu.GTP complex up to the GTP hydrolysis stage on the ribosome. This is Elongation factor Ts from Corynebacterium glutamicum (strain ATCC 13032 / DSM 20300 / JCM 1318 / BCRC 11384 / CCUG 27702 / LMG 3730 / NBRC 12168 / NCIMB 10025 / NRRL B-2784 / 534).